The sequence spans 311 residues: Acetyl-coenzyme A carboxylase carboxyl transferase subunit alpha (311 aa).

The CoA carboxyltransferase C-terminal domain maps to 34–286 (EKDLQKEASK…KEYYLQNIRE (253 aa)).

This sequence belongs to the AccA family. In terms of assembly, acetyl-CoA carboxylase is a heterohexamer composed of biotin carboxyl carrier protein (AccB), biotin carboxylase (AccC) and two subunits each of ACCase subunit alpha (AccA) and ACCase subunit beta (AccD).

Its subcellular location is the cytoplasm. It catalyses the reaction N(6)-carboxybiotinyl-L-lysyl-[protein] + acetyl-CoA = N(6)-biotinyl-L-lysyl-[protein] + malonyl-CoA. Its pathway is lipid metabolism; malonyl-CoA biosynthesis; malonyl-CoA from acetyl-CoA: step 1/1. In terms of biological role, component of the acetyl coenzyme A carboxylase (ACC) complex. First, biotin carboxylase catalyzes the carboxylation of biotin on its carrier protein (BCCP) and then the CO(2) group is transferred by the carboxyltransferase to acetyl-CoA to form malonyl-CoA. The chain is Acetyl-coenzyme A carboxylase carboxyl transferase subunit alpha from Nitratiruptor sp. (strain SB155-2).